Reading from the N-terminus, the 232-residue chain is Ubiquinone biosynthesis O-methyltransferase (232 aa).

S-adenosyl-L-methionine contacts are provided by Arg36, Gly55, Asp76, and Leu120.

Belongs to the methyltransferase superfamily. UbiG/COQ3 family.

It carries out the reaction a 3-demethylubiquinol + S-adenosyl-L-methionine = a ubiquinol + S-adenosyl-L-homocysteine + H(+). It catalyses the reaction a 3-(all-trans-polyprenyl)benzene-1,2-diol + S-adenosyl-L-methionine = a 2-methoxy-6-(all-trans-polyprenyl)phenol + S-adenosyl-L-homocysteine + H(+). It participates in cofactor biosynthesis; ubiquinone biosynthesis. Its function is as follows. O-methyltransferase that catalyzes the 2 O-methylation steps in the ubiquinone biosynthetic pathway. The polypeptide is Ubiquinone biosynthesis O-methyltransferase (Pseudomonas entomophila (strain L48)).